The following is a 266-amino-acid chain: Carboxy-S-adenosyl-L-methionine synthase (266 aa).

The disordered stretch occupies residues 1-24 (MPKRETQSLHDTQQQPGPTAPQRD). Residues Tyr-58, 83 to 85 (GCS), 108 to 109 (DN), 136 to 137 (DI), Asn-151, and Arg-218 contribute to the S-adenosyl-L-methionine site.

Belongs to the class I-like SAM-binding methyltransferase superfamily. Cx-SAM synthase family. Homodimer.

It carries out the reaction prephenate + S-adenosyl-L-methionine = carboxy-S-adenosyl-L-methionine + 3-phenylpyruvate + H2O. Catalyzes the conversion of S-adenosyl-L-methionine (SAM) to carboxy-S-adenosyl-L-methionine (Cx-SAM). The chain is Carboxy-S-adenosyl-L-methionine synthase from Yersinia enterocolitica serotype O:8 / biotype 1B (strain NCTC 13174 / 8081).